Consider the following 502-residue polypeptide: ATP synthase subunit alpha 1/3 (502 aa).

Residue 169-176 coordinates ATP; sequence GDRQTGKT.

It belongs to the ATPase alpha/beta chains family. F-type ATPases have 2 components, CF(1) - the catalytic core - and CF(0) - the membrane proton channel. CF(1) has five subunits: alpha(3), beta(3), gamma(1), delta(1), epsilon(1). CF(0) has three main subunits: a(1), b(2) and c(9-12). The alpha and beta chains form an alternating ring which encloses part of the gamma chain. CF(1) is attached to CF(0) by a central stalk formed by the gamma and epsilon chains, while a peripheral stalk is formed by the delta and b chains.

It localises to the cell inner membrane. It carries out the reaction ATP + H2O + 4 H(+)(in) = ADP + phosphate + 5 H(+)(out). In terms of biological role, produces ATP from ADP in the presence of a proton gradient across the membrane. The alpha chain is a regulatory subunit. The sequence is that of ATP synthase subunit alpha 1/3 from Syntrophotalea carbinolica (strain DSM 2380 / NBRC 103641 / GraBd1) (Pelobacter carbinolicus).